Here is a 345-residue protein sequence, read N- to C-terminus: Methionine import ATP-binding protein MetN (345 aa).

One can recognise an ABC transporter domain in the interval 2–241 (IKLKNISKIF…PKTELAQEFI (240 aa)). 38–45 (GASGAGKS) contributes to the ATP binding site.

It belongs to the ABC transporter superfamily. Methionine importer (TC 3.A.1.24) family. As to quaternary structure, the complex is composed of two ATP-binding proteins (MetN), two transmembrane proteins (MetI) and a solute-binding protein (MetQ).

The protein localises to the cell inner membrane. It catalyses the reaction L-methionine(out) + ATP + H2O = L-methionine(in) + ADP + phosphate + H(+). The enzyme catalyses D-methionine(out) + ATP + H2O = D-methionine(in) + ADP + phosphate + H(+). Functionally, part of the ABC transporter complex MetNIQ involved in methionine import. Responsible for energy coupling to the transport system. The polypeptide is Methionine import ATP-binding protein MetN (Mannheimia succiniciproducens (strain KCTC 0769BP / MBEL55E)).